Consider the following 77-residue polypeptide: Conotoxin Cl6.15 (77 aa).

An N-terminal signal peptide occupies residues 1–19 (MKLSVKFLLFLMILPLIAG). Residues 20-37 (EDMSDNDAPKSVDVQRNV) constitute a propeptide that is removed on maturation. 3 disulfide bridges follow: Cys-49–Cys-61, Cys-55–Cys-66, and Cys-60–Cys-75.

This sequence belongs to the conotoxin I1 superfamily. Expressed by the venom duct.

Its subcellular location is the secreted. The protein is Conotoxin Cl6.15 of Californiconus californicus (California cone).